A 533-amino-acid polypeptide reads, in one-letter code: Retinoic acid receptor RXR-beta (533 aa).

A disordered region spans residues 1-23 (MSWAARPPFLPQRHAAGQCGPVG). The modulating stretch occupies residues 1–204 (MSWAARPPFL…PGGPGAGKRL (204 aa)). Residue arginine 25 is modified to Omega-N-methylarginine. A disordered region spans residues 36–181 (WRRRRPWLDP…GSGPPEDVKP (146 aa)). A compositionally biased stretch (low complexity) spans 46–61 (AAAAAAAVAGGEQQTP). Residues 67–82 (EAGRDGMGDSGRDSRS) show a composition bias toward basic and acidic residues. Pro residues-rich tracts occupy residues 89-109 (NPLP…PPST) and 118-131 (APPP…PLGS). Positions 132-143 (PFPVISSSMGSP) are enriched in low complexity. Pro residues predominate over residues 144–153 (GLPPPAPPGF). NR C4-type zinc fingers lie at residues 205–225 (CAIC…CEGC) and 241–265 (CRDN…YQKC). The nuclear receptor DNA-binding region spans 205–270 (CAICGDRSSG…RYQKCLATGM (66 aa)). Residues 271-295 (KREAVQEERQRGKDKDGDGEGAGGA) form a hinge region. The span at 276–288 (QEERQRGKDKDGD) shows a compositional bias: basic and acidic residues. Disordered stretches follow at residues 276–299 (QEER…PEEM) and 313–336 (QKSD…NDPV). In terms of domain architecture, NR LBD spans 296-529 (PEEMPVDRIL…TFLMEMLEAP (234 aa)). Positions 320 to 329 (EGPGGTGGSG) are enriched in gly residues.

Belongs to the nuclear hormone receptor family. NR2 subfamily. In terms of assembly, homodimer (in vitro). Heterodimer with other retinoic acid receptor family members. Binds DNA preferentially as a RAR/RXR heterodimer. Interacts with NR1H3. Interacts with AKAP13. As to expression, expressed in aortic endothelial cells (at protein level). Expressed in monocytes. Expressed in a variety of tumor cell lines.

It is found in the nucleus. The protein localises to the cytoplasm. Receptor for retinoic acid. Retinoic acid receptors bind as heterodimers to their target response elements in response to their ligands, all-trans or 9-cis retinoic acid, and regulate gene expression in various biological processes. The RAR/RXR heterodimers bind to the retinoic acid response elements (RARE). The polypeptide is Retinoic acid receptor RXR-beta (RXRB) (Homo sapiens (Human)).